A 92-amino-acid chain; its full sequence is Conotoxin Cal22f (92 aa).

Positions 1–24 are cleaved as a signal peptide; sequence MMSTKGITLFLCLLLLALATSVNG. Positions 25 to 44 are excised as a propeptide; sequence GQGTRRSRMTRALHGGRPSA.

In terms of processing, contains 4 disulfide bonds. As to expression, expressed by the venom duct.

Its subcellular location is the secreted. Probable neurotoxin with unknown target. Possibly targets ion channels. This chain is Conotoxin Cal22f, found in Californiconus californicus (California cone).